The primary structure comprises 550 residues: MALWRGGGALGLLLLSAACLIPPSAQVRRLARCPATCSCTKESIICVGSSWVPRIVPGDISSLSLVNGTFLEIKDRMFSHLPSLQLLLLNSNSFTVIRDDAFAGLFHLEYLFIEGNKIETISRNAFRGLRDLTHLDLRGNKFECDCKAKWLYLWLKMTNSTVSDVLCIGPPEYQEKKLNEVTSFDYECTTTGPQTDEAKQRGWQLELSLGFCELIFVFQHPLSDFVVHQTLPYQSVSVDTFNSKNDVYVAIAQPSMENCMVLEWDHIEMNFRSYDNITGQSIVGCKAILIDDQVFVVVAQLFGGSHIYKYDESWTKFVKFQDIEVSRISKPNDIELFEIDDETFFIIADSSKAGLSTVYKWNSKGFYSYQSLHEWFRDTDAEFVDIDGKSHLILSSRSQVPIILQWNKSSKKFVPHGDIPNMEDVLAVKSFRMQNTLYLSLTRFIGDSRVMRWNSKQFVEVQALPSRGAMTLQPFSFKDNHYLALGSDYTFSQIYQWDKEKQQFKKFKEIYVQAPRSFTAVSTDRRDFFFASSFKGKTKIFEHIIVDLSL.

A signal peptide spans 1–25; sequence MALWRGGGALGLLLLSAACLIPPSA. Residues 26-62 form the LRRNT domain; it reads QVRRLARCPATCSCTKESIICVGSSWVPRIVPGDISS. N-linked (GlcNAc...) asparagine glycosylation occurs at Asn67. LRR repeat units lie at residues 83–104 and 107–128; these read SLQL…AFAG and HLEY…AFRG. The 51-residue stretch at 140–190 folds into the LRRCT domain; that stretch reads NKFECDCKAKWLYLWLKMTNSTVSDVLCIGPPEYQEKKLNEVTSFDYECTT. The N-linked (GlcNAc...) asparagine glycan is linked to Asn159. EAR repeat units lie at residues 224 to 266, 270 to 312, 316 to 363, 365 to 408, 412 to 455, 457 to 499, and 503 to 545; these read DFVV…EWDH, NFRS…KYDE, KFVK…KWNS, GFYS…QWNK, KFVP…RWNS, QFVE…QWDK, and QFKK…EHII. Asn276 is a glycosylation site (N-linked (GlcNAc...) asparagine). An N-linked (GlcNAc...) asparagine glycan is attached at Asn407.

Brain.

The protein localises to the secreted. Required for the development of soma-targeting inhibitory GABAergic synapses made by parvalbumin-positive basket cells. The protein is Leucine-rich repeat LGI family member 2 (Lgi2) of Mus musculus (Mouse).